An 86-amino-acid polypeptide reads, in one-letter code: Large ribosomal subunit protein uL23 (86 aa).

It belongs to the universal ribosomal protein uL23 family. As to quaternary structure, part of the 50S ribosomal subunit. Contacts protein L29.

Functionally, binds to 23S rRNA. One of the proteins that surrounds the polypeptide exit tunnel on the outside of the ribosome. The chain is Large ribosomal subunit protein uL23 from Pyrococcus horikoshii (strain ATCC 700860 / DSM 12428 / JCM 9974 / NBRC 100139 / OT-3).